The following is a 131-amino-acid chain: D-ribose pyranase (131 aa).

The active-site Proton donor is histidine 20. Substrate contacts are provided by residues aspartate 28, histidine 98, and 120-122 (YAN).

This sequence belongs to the RbsD / FucU family. RbsD subfamily. In terms of assembly, homodecamer.

The protein resides in the cytoplasm. It carries out the reaction beta-D-ribopyranose = beta-D-ribofuranose. It functions in the pathway carbohydrate metabolism; D-ribose degradation; D-ribose 5-phosphate from beta-D-ribopyranose: step 1/2. Functionally, catalyzes the interconversion of beta-pyran and beta-furan forms of D-ribose. This Bacillus anthracis (strain A0248) protein is D-ribose pyranase.